A 236-amino-acid polypeptide reads, in one-letter code: Small ribosomal subunit protein uS2c (236 aa).

Belongs to the universal ribosomal protein uS2 family.

It localises to the plastid. It is found in the chloroplast. The protein is Small ribosomal subunit protein uS2c (rps2) of Citrus sinensis (Sweet orange).